The following is a 155-amino-acid chain: Ribosome maturation factor RimP (155 aa).

Belongs to the RimP family.

The protein resides in the cytoplasm. Required for maturation of 30S ribosomal subunits. The chain is Ribosome maturation factor RimP from Dichelobacter nodosus (strain VCS1703A).